The following is a 696-amino-acid chain: Interleukin-1 receptor accessory protein-like 1 (696 aa).

The N-terminal stretch at 1–18 (MKAPIPHLILLYATFTQS) is a signal peptide. The Ig-like 1 domain maps to 19 to 134 (LKVVTKRGSA…YCMKVSISLT (116 aa)). Residues 19-357 (LKVVTKRGSA…LLHKRELMYT (339 aa)) are Extracellular-facing. Disulfide bonds link C31–C126 and C53–C118. Residues N63, N122, and N138 are each glycosylated (N-linked (GlcNAc...) asparagine). 2 disulfides stabilise this stretch: C143–C185 and C164–C216. Ig-like domains follow at residues 143 to 232 (CYNS…TELT) and 242 to 350 (PKLL…VLLH). Residues N213, N264, and N331 are each glycosylated (N-linked (GlcNAc...) asparagine). C267 and C334 are disulfide-bonded. Residues 358 to 378 (VELAGGLGAILLLLVCLVTIY) traverse the membrane as a helical segment. Topologically, residues 379-696 (KCYKIEIMLF…RETSISSVIW (318 aa)) are cytoplasmic. In terms of domain architecture, TIR spans 403-559 (KDYDAYLSYT…KFWKRLQYEM (157 aa)). E491 is an active-site residue. Positions 549-644 (SKFWKRLQYE…TGTLPLTSIG (96 aa)) are interaction with NCS1. The tract at residues 659 to 680 (GQRPQTKSSREQNPDEAHTNSA) is disordered. Basic and acidic residues predominate over residues 666 to 676 (SSREQNPDEAH).

This sequence belongs to the interleukin-1 receptor family. Homodimer. Interacts (calcium-independent) with NCS1/FREQ. Interacts (via the first immunoglobilin domain) with PTPRD (via the second immunoglobilin domain); this interaction is PTPRD-splicing-dependent and induces pre- and post-synaptic differentiation of neurons and is required for IL1RAPL1-mediated synapse formation.

Its subcellular location is the cell membrane. The protein resides in the cytoplasm. The protein localises to the cell projection. It localises to the axon. It is found in the dendrite. The enzyme catalyses NAD(+) + H2O = ADP-D-ribose + nicotinamide + H(+). In terms of biological role, may regulate secretion and presynaptic differentiation through inhibition of the activity of N-type voltage-gated calcium channel. May activate the MAP kinase JNK. Plays a role in neurite outgrowth. During dendritic spine formation can bidirectionally induce pre- and post-synaptic differentiation of neurons by trans-synaptically binding to PTPRD. This chain is Interleukin-1 receptor accessory protein-like 1 (IL1RAPL1), found in Pongo pygmaeus (Bornean orangutan).